A 681-amino-acid chain; its full sequence is Potassium-transporting ATPase ATP-binding subunit (681 aa).

The next 4 membrane-spanning stretches (helical) occupy residues 30-50 (LLVY…FFGI), 59-79 (LAIA…EAIA), 216-236 (ILLV…LPFT), and 255-275 (IALL…SIGI). Catalysis depends on Asp306, which acts as the 4-aspartylphosphate intermediate. ATP contacts are provided by residues Asp343, Glu347, 376 to 383 (FTATTRMS), and Lys394. Mg(2+)-binding residues include Asp517 and Asp521. The next 3 membrane-spanning stretches (helical) occupy residues 587 to 607 (FAII…LNLM), 615 to 635 (AILS…PLSL), and 661 to 681 (LVAP…LGIV).

It belongs to the cation transport ATPase (P-type) (TC 3.A.3) family. Type IA subfamily. The system is composed of three essential subunits: KdpA, KdpB and KdpC.

Its subcellular location is the cell membrane. The enzyme catalyses K(+)(out) + ATP + H2O = K(+)(in) + ADP + phosphate + H(+). Part of the high-affinity ATP-driven potassium transport (or Kdp) system, which catalyzes the hydrolysis of ATP coupled with the electrogenic transport of potassium into the cytoplasm. This subunit is responsible for energy coupling to the transport system and for the release of the potassium ions to the cytoplasm. The protein is Potassium-transporting ATPase ATP-binding subunit of Listeria welshimeri serovar 6b (strain ATCC 35897 / DSM 20650 / CCUG 15529 / CIP 8149 / NCTC 11857 / SLCC 5334 / V8).